Here is a 597-residue protein sequence, read N- to C-terminus: Alkyldihydroxyacetonephosphate synthase (597 aa).

The 183-residue stretch at 131–313 folds into the FAD-binding PCMH-type domain; that stretch reads IPRLPDIVVW…SEVTIKIFPI (183 aa). FAD contacts are provided by residues 163–169, 232–238, 245–248, and 297–303; these read PIGGGTS, DSIEFST, TRAS, and EGTLGVV. Arg444 provides a ligand contact to substrate. Catalysis depends on Tyr507, which acts as the Proton donor/acceptor. Residues 544–546 are important for enzyme activity; it reads HHH. The Microbody targeting signal motif lies at 595 to 597; sequence CKL.

This sequence belongs to the FAD-binding oxidoreductase/transferase type 4 family. As to quaternary structure, homodimer. FAD is required as a cofactor.

The protein resides in the peroxisome. It catalyses the reaction a long chain fatty alcohol + a 1-acylglycerone 3-phosphate = a 1-O-alkylglycerone 3-phosphate + a long-chain fatty acid + H(+). It participates in glycerolipid metabolism; ether lipid biosynthesis. Its function is as follows. Catalyzes the exchange of an acyl for a long-chain alkyl group and the formation of the ether bond in the biosynthesis of ether phospholipids. This chain is Alkyldihydroxyacetonephosphate synthase (ads-1), found in Caenorhabditis elegans.